We begin with the raw amino-acid sequence, 105 residues long: Replication restart protein PriB (105 aa).

In terms of domain architecture, SSB spans 1-102 (MTTNRLVLSG…LHAEQIELID (102 aa)).

It belongs to the PriB family. As to quaternary structure, homodimer. Interacts with PriA and DnaT. Component of the replication restart primosome. Primosome assembly occurs via a 'hand-off' mechanism. PriA binds to replication forks, subsequently PriB then DnaT bind; DnaT then displaces ssDNA to generate the helicase loading substrate.

In terms of biological role, involved in the restart of stalled replication forks, which reloads the replicative helicase on sites other than the origin of replication; the PriA-PriB pathway is the major replication restart pathway. During primosome assembly it facilitates complex formation between PriA and DnaT on DNA; stabilizes PriA on DNA. Stimulates the DNA unwinding activity of PriA helicase. This is Replication restart protein PriB from Photorhabdus laumondii subsp. laumondii (strain DSM 15139 / CIP 105565 / TT01) (Photorhabdus luminescens subsp. laumondii).